The following is a 218-amino-acid chain: Copper acquisition factor BIM1 (218 aa).

The N-terminal stretch at 1-19 (MFALKSILVTSLITSTALA) is a signal peptide. 2 residues coordinate Cu(2+): His20 and His65. Asn87, Asn91, and Asn124 each carry an N-linked (GlcNAc...) asparagine glycan. Asp138 serves as a coordination point for Cu(2+). Residues Asn158 and Asn170 are each glycosylated (N-linked (GlcNAc...) asparagine). Residues 160–194 (TCTNDASKASNATSTSSGSATATSAAATSSSSGTS) form a disordered region. Residues 165–194 (ASKASNATSTSSGSATATSAAATSSSSGTS) show a composition bias toward low complexity. Ser190 is lipidated: GPI-anchor amidated serine. A propeptide spans 191–218 (SGTSGAIKEVVGFGALSLALGIAGLIIL) (removed in mature form).

The protein belongs to the X325 family. As to quaternary structure, interacts with the CUF1-dependent copper transporter CTR1. It depends on Cu(2+) as a cofactor.

The protein localises to the cell membrane. Lytic polysaccharide monooxygenase-like protein that has diverged to biological functions other than polysaccharide degradation since it does not perform oxidative cleavage of polysaccharides. Cell surface-bound protein that functions in the copper-accumulation pathway shared by the CUF1-dependent copper transporter CTR1. Involved in maintaining cell wall integrity during copper deficiency. Binds Cu(2+) with an estimated 1:1 stoichiometry and might serve as an extracellular copper ligand. FRE4 and FRE7 metalloreductases probably function together with CTR1 and BIM1 to liberate the Cu(2+) bound to the BIM1 copper-binding site for subsequent import of Cu(+) into the cell by CTR1, via the reduction of BIM1-bound Cu(2+) to Cu(+) to reduce binding affinity for BIM1 but increase affinity for CTR1. Facilitates copper acquisition in the brain of mammalian hosts and acts as a copper-dependent virulence trait in fungal meningitis. While BIM1 plays a critical role in cryptococcal meningitis, at least in part through its role in copper acquisition, it could play additional roles during copper limitation or as a means to invade and colonize host tissues in the brain, by compromising host carbohydrate integrity via its lytic polysaccharide monooxygenase (LPMO) activity, which has still to be determined. This Cryptococcus neoformans var. grubii serotype A (strain H99 / ATCC 208821 / CBS 10515 / FGSC 9487) (Filobasidiella neoformans var. grubii) protein is Copper acquisition factor BIM1.